The sequence spans 244 residues: uncharacterized protein (244 aa).

This is an uncharacterized protein from Ostreid herpesvirus 1 (isolate France) (OsHV-1).